Here is a 327-residue protein sequence, read N- to C-terminus: 4-hydroxy-2-oxoglutarate aldolase, mitochondrial (327 aa).

Residues 1–25 constitute a mitochondrion transit peptide; sequence MLGPQVWSSVRQGLSRSLSRNVGVW. 77–78 provides a ligand contact to substrate; it reads SN. The active-site Schiff-base intermediate with substrate is the lysine 196. Positions 198 and 222 each coordinate substrate.

Belongs to the DapA family. As to quaternary structure, homotetramer.

It localises to the mitochondrion. It catalyses the reaction (4S)-4-hydroxy-2-oxoglutarate = glyoxylate + pyruvate. It carries out the reaction (4R)-4-hydroxy-2-oxoglutarate = glyoxylate + pyruvate. Inhibited by divalent cations. Its function is as follows. Catalyzes the final step in the metabolic pathway of hydroxyproline. This is 4-hydroxy-2-oxoglutarate aldolase, mitochondrial (HOGA1) from Homo sapiens (Human).